Here is a 621-residue protein sequence, read N- to C-terminus: GPI-anchor transamidase component GPAA1 (621 aa).

Residues 2-19 (GLLSDPVRRRALARLVLR) lie on the Cytoplasmic side of the membrane. Residues 20-41 (LNAPLCVLSYVAGIAWFLALVF) form a helical membrane-spanning segment. Residues 42–370 (PPLTQRTYMS…LLPGLSRFVS (329 aa)) lie on the Lumenal side of the membrane. Residues tyrosine 49 and serine 51 each coordinate a 2-acyl-6-[6-phosphoethanolamine-alpha-D-mannosyl-(1-&gt;2)-6-phosphoethanolamine-alpha-D-mannosyl-(1-&gt;6)-2-phosphoethanolamine-alpha-D-mannosyl-(1-&gt;4)-alpha-D-glucosaminyl]-1-(1-radyl,2-acyl-sn-glycero-3-phospho)-1D-myo-inositol. Asparagine 203 is a glycosylation site (N-linked (GlcNAc...) asparagine). Cysteine 259 and cysteine 266 are disulfide-bonded. Histidine 354, glutamine 355, and serine 356 together coordinate a 2-acyl-6-[6-phosphoethanolamine-alpha-D-mannosyl-(1-&gt;2)-6-phosphoethanolamine-alpha-D-mannosyl-(1-&gt;6)-2-phosphoethanolamine-alpha-D-mannosyl-(1-&gt;4)-alpha-D-glucosaminyl]-1-(1-radyl,2-acyl-sn-glycero-3-phospho)-1D-myo-inositol. Mg(2+) is bound at residue glutamine 355. The chain crosses the membrane as a helical span at residues 371 to 393 (IGLYMPAVGFLLLVLGLKALELW). Over 394–425 (MQLHEAGMGLEEPGGAPGPSVPLPPSQGVGLA) the chain is Cytoplasmic. The chain crosses the membrane as a helical span at residues 426-450 (SLVAPLLISQAMGLALYVLPVLGQH). Residues 451 to 462 (VATQHFPVAEAE) are Lumenal-facing. The helical transmembrane segment at 463–483 (AVVLTLLAIYAAGLALPHNTH) threads the bilayer. Residues 484–495 (RVVSTQAPDRGW) are Cytoplasmic-facing. 2 consecutive transmembrane segments (helical) span residues 496–519 (MALKLVALIYLALQLGCIALTNFS) and 520–536 (LGFLLATTMVPTAALAK). At 537–540 (PHGP) the chain is on the cytoplasmic side. Residues 541–563 (RTLYAALLVLTSPAATLLGSLFL) form a helical membrane-spanning segment. The Lumenal segment spans residues 564–597 (WRELQEAPLSLAEGWQLFLAALAQGVLEHHTYGA). Residues 598–619 (LLFPLLSLGLYPCWLLFWNVLF) traverse the membrane as a helical segment. The Cytoplasmic segment spans residues 620–621 (WK).

As to quaternary structure, heteropentamer. Part of the GPI-anchor transamidase complex, consisting of PIGK, PIGT, PIGS, PIGU and GAA1. Interacts with PIGK. Ubiquitously expressed in fetal and adult tissues. Expressed at higher levels in fetal tissues than adult tissues.

The protein resides in the endoplasmic reticulum membrane. It functions in the pathway glycolipid biosynthesis; glycosylphosphatidylinositol-anchor biosynthesis. Functionally, component of the glycosylphosphatidylinositol-anchor (GPI-anchor) transamidase (GPI-T) complex that catalyzes the formation of the linkage between a proprotein and a GPI-anchor and participates in GPI anchored protein biosynthesis. Binds GPI-anchor. The sequence is that of GPI-anchor transamidase component GPAA1 from Homo sapiens (Human).